A 540-amino-acid polypeptide reads, in one-letter code: Bifunctional purine biosynthesis protein PurH (540 aa).

The region spanning 1-144 (MKRALISVYD…KNYQDVGVVV (144 aa)) is the MGS-like domain. Residues 204–224 (ETAPERPIGADPGPQKPAAPS) are disordered.

It belongs to the PurH family.

It carries out the reaction (6R)-10-formyltetrahydrofolate + 5-amino-1-(5-phospho-beta-D-ribosyl)imidazole-4-carboxamide = 5-formamido-1-(5-phospho-D-ribosyl)imidazole-4-carboxamide + (6S)-5,6,7,8-tetrahydrofolate. The catalysed reaction is IMP + H2O = 5-formamido-1-(5-phospho-D-ribosyl)imidazole-4-carboxamide. The protein operates within purine metabolism; IMP biosynthesis via de novo pathway; 5-formamido-1-(5-phospho-D-ribosyl)imidazole-4-carboxamide from 5-amino-1-(5-phospho-D-ribosyl)imidazole-4-carboxamide (10-formyl THF route): step 1/1. Its pathway is purine metabolism; IMP biosynthesis via de novo pathway; IMP from 5-formamido-1-(5-phospho-D-ribosyl)imidazole-4-carboxamide: step 1/1. The chain is Bifunctional purine biosynthesis protein PurH from Symbiobacterium thermophilum (strain DSM 24528 / JCM 14929 / IAM 14863 / T).